A 642-amino-acid chain; its full sequence is Triacylglycerol lipase 3 (642 aa).

One can recognise a PNPLA domain in the interval 204–392; the sequence is LILQGGSLFG…NEIEPFLNIN (189 aa). The GXSXG motif lies at 235–239; sequence GSSMG. Ser237 (nucleophile) is an active-site residue. The short motif at 298–303 is the HXXXXD acyltransferase motif element; it reads HGYSQD. The active-site Proton acceptor is the Glu403. Residues 471–481 show a composition bias toward polar residues; that stretch reads RKTQRSSSQSP. The disordered stretch occupies residues 471 to 502; that stretch reads RKTQRSSSQSPIKAGTVEDLEPEPLMSPVPPS.

It localises to the lipid droplet. The enzyme catalyses a triacylglycerol + H2O = a diacylglycerol + a fatty acid + H(+). It carries out the reaction 1,2,3-tri-(9Z-octadecenoyl)-glycerol + H2O = di-(9Z)-octadecenoylglycerol + (9Z)-octadecenoate + H(+). It catalyses the reaction di-(9Z)-octadecenoylglycerol + H2O = (9Z-octadecenoyl)-glycerol + (9Z)-octadecenoate + H(+). The catalysed reaction is a 1-acyl-sn-glycero-3-phosphoethanolamine + (9Z)-octadecenoyl-CoA = 1-acyl-2-(9Z)-octadecenoyl-sn-glycero-3-phosphoethanolamine + CoA. The enzyme catalyses a 1-acyl-sn-glycero-3-phosphoethanolamine + hexadecanoyl-CoA = 1-acyl-2-hexadecanoyl-sn-glycero-3-phosphoethanolamine + CoA. Its activity is regulated as follows. Loses its lipolytic activity in cells lacking nonpolar lipids. Lipid particle-localized triacylglycerol (TAG) lipase. The lipid droplet/particle is a lipid storage compartment which serves as a depot of energy and building blocks for membrane lipid biosynthesis. Involved in the mobilization of the non-polar storage lipids triacylglycerols (TAGs) from lipid particles by hydrolysis of TAGs, releasing and supplying specific fatty acids to the appropriate metabolic pathways. Also catalyzes the acylation of lysophosphatidic acid (LPA). Important for efficient sporulation, but rather through its acyltransferase than lipase activity. The chain is Triacylglycerol lipase 3 (TGL3) from Saccharomyces cerevisiae (strain ATCC 204508 / S288c) (Baker's yeast).